We begin with the raw amino-acid sequence, 420 residues long: Protein MucB (420 aa).

In terms of domain architecture, UmuC spans 2–187; it reads FALIDVNGMY…LPVAEVWGVG (186 aa).

The protein belongs to the DNA polymerase type-Y family.

In terms of biological role, involved in UV protection and mutation. This chain is Protein MucB (mucB), found in Escherichia coli.